Here is a 126-residue protein sequence, read N- to C-terminus: E3 ubiquitin-protein ligase PPP1R11 (126 aa).

A disordered region spans residues 1–25 (MAEAGAGLSETVTETTVTVTTEPEN). Alanine 2 is subject to N-acetylalanine. Residues 10–22 (ETVTETTVTVTTE) show a composition bias toward low complexity. An atypical RING finger domain 1 region spans residues 52–62 (HMGRRSSKCCC). The disordered stretch occupies residues 70 to 126 (FGESSTESDEEEEEGCGHTHCVRGHRKGRRRATLGPTPTTPPQPPDPSQPPPGPMQH). Serine 73 and serine 74 each carry phosphoserine. The residue at position 75 (threonine 75) is a Phosphothreonine. Serine 77 carries the post-translational modification Phosphoserine. Positions 85–94 (CGHTHCVRGH) are atypical RING finger domain 2. Basic residues predominate over residues 89–101 (HCVRGHRKGRRRA). Residues 107 to 126 (PTTPPQPPDPSQPPPGPMQH) are compositionally biased toward pro residues. The residue at position 109 (threonine 109) is a Phosphothreonine.

Interacts with TLR2 and UBE2D2. In terms of processing, auto-ubiquitinated. As to expression, widely expressed.

It catalyses the reaction S-ubiquitinyl-[E2 ubiquitin-conjugating enzyme]-L-cysteine + [acceptor protein]-L-lysine = [E2 ubiquitin-conjugating enzyme]-L-cysteine + N(6)-ubiquitinyl-[acceptor protein]-L-lysine.. The protein operates within protein modification; protein ubiquitination. Its function is as follows. Atypical E3 ubiquitin-protein ligase which ubiquitinates TLR2 at 'Lys-754' leading to its degradation by the proteasome. Plays a role in regulating inflammatory cytokine release and gram-positive bacterial clearance by functioning, in part, through the ubiquitination and degradation of TLR2. Inhibitor of protein phosphatase 1. The protein is E3 ubiquitin-protein ligase PPP1R11 (PPP1R11) of Homo sapiens (Human).